The following is a 636-amino-acid chain: Chaperone protein HtpG (636 aa).

The a; substrate-binding stretch occupies residues 1–342 (MSGETLEFQA…AHDLSLNISR (342 aa)). The segment at 343 to 558 (ELLQQDRQIQ…AHDVTPTLEK (216 aa)) is b. Residues 559-636 (MYRAMGHEVP…ILAERLARTL (78 aa)) form a c region.

The protein belongs to the heat shock protein 90 family. As to quaternary structure, homodimer.

It is found in the cytoplasm. Molecular chaperone. Has ATPase activity. The sequence is that of Chaperone protein HtpG from Salinispora arenicola (strain CNS-205).